Consider the following 317-residue polypeptide: Transcription factor EC (317 aa).

The segment at 1-90 (MTFDCRVCDQ…GLTDAPCPSI (90 aa)) is necessary for transcriptional transactivation. In terms of domain architecture, bHLH spans 110–163 (QKKDNHNLIERRRRYNINYRIKELGTLIPKSNDPDMRWNKGTILKASVDYIKWL). The segment at 242-317 (TSPEFYEQAV…SLSSEDGDEL (76 aa)) is necessary for transcriptional transactivation.

The protein belongs to the MiT/TFE family. As to quaternary structure, homodimer. Forms heterodimers with MITF. Interacts with MITF. Forms heterodimers with TFE3. In terms of tissue distribution, expressed in osteoclast-like cells (at protein level). Expressed in cells of the mononuclear phagocyte lineage. Expressed in macrophages and in osteoclast-like cells.

The protein localises to the nucleus. Transcriptional regulator that acts as a repressor or an activator. Acts as a transcriptional transactivator on the proximal promoter region of the tartrate-resistant acid phosphatase (TRAP) E-box containing promoter. Collaborates with MITF in target gene activation. Acts as a transcriptional repressor on minimal promoter containing element F (that includes an E-box sequence). Binds to element F in an E-box sequence-specific manner. Acts as a transcriptional repressor on minimal promoter containing mu E3 enhancer sequence. Binds to mu E3 DNA sequence of the immunoglobulin heavy-chain gene enhancer. Binds DNA in a homo- or heterodimeric form. This chain is Transcription factor EC (Tfec), found in Mus musculus (Mouse).